Reading from the N-terminus, the 486-residue chain is Intermediate cleaving peptidase 55 (486 aa).

A mitochondrion-targeting transit peptide spans 1–19 (MSGYIRTLFIRNRFSNYRL). Residues aspartate 317, aspartate 328, histidine 407, glutamate 434, and glutamate 457 each coordinate Mn(2+).

This sequence belongs to the peptidase M24B family. Requires Mn(2+) as cofactor.

The protein localises to the mitochondrion inner membrane. It carries out the reaction The enzyme cleaves the 36-Pro-Pro-37 bond of cysteine desulfurase (EC 2.8.1.7) removing three amino acid residues (Tyr-Ser-Pro) from the N-terminus after cleavage by mitochondrial processing peptidase.. Its function is as follows. Aminopeptidase which cleaves preprotein intermediates that carry destabilizing N-ter amino acid residues after the mitochondrial processing peptidase (MPP) cleavage site and is thus critical for stabilization of the mitochondrial proteome. The sequence is that of Intermediate cleaving peptidase 55 (icp55) from Schizosaccharomyces pombe (strain 972 / ATCC 24843) (Fission yeast).